A 287-amino-acid chain; its full sequence is Formamidopyrimidine-DNA glycosylase (287 aa).

The active-site Schiff-base intermediate with DNA is proline 2. Glutamate 3 serves as the catalytic Proton donor. Lysine 58 (proton donor; for beta-elimination activity) is an active-site residue. Residues histidine 104, arginine 123, and arginine 166 each contribute to the DNA site. The FPG-type zinc finger occupies 251–287 (RTYDREGQPCRNDGCRGVIGREVQAGRSTFYCPVCQR). Arginine 277 functions as the Proton donor; for delta-elimination activity in the catalytic mechanism.

The protein belongs to the FPG family. In terms of assembly, monomer. Zn(2+) is required as a cofactor.

It catalyses the reaction Hydrolysis of DNA containing ring-opened 7-methylguanine residues, releasing 2,6-diamino-4-hydroxy-5-(N-methyl)formamidopyrimidine.. The catalysed reaction is 2'-deoxyribonucleotide-(2'-deoxyribose 5'-phosphate)-2'-deoxyribonucleotide-DNA = a 3'-end 2'-deoxyribonucleotide-(2,3-dehydro-2,3-deoxyribose 5'-phosphate)-DNA + a 5'-end 5'-phospho-2'-deoxyribonucleoside-DNA + H(+). In terms of biological role, involved in base excision repair of DNA damaged by oxidation or by mutagenic agents. Acts as a DNA glycosylase that recognizes and removes damaged bases. Has a preference for oxidized purines, such as 7,8-dihydro-8-oxoguanine (8-oxoG). Has AP (apurinic/apyrimidinic) lyase activity and introduces nicks in the DNA strand. Cleaves the DNA backbone by beta-delta elimination to generate a single-strand break at the site of the removed base with both 3'- and 5'-phosphates. This chain is Formamidopyrimidine-DNA glycosylase, found in Phenylobacterium zucineum (strain HLK1).